Here is a 589-residue protein sequence, read N- to C-terminus: Transmembrane 9 superfamily member 5 (589 aa).

The signal sequence occupies residues 1–24 (MAQFLLTVLQVLLALTFWIGIGSG). At 25-227 (SSNHYNAGDH…SFHPISQKIH (203 aa)) the chain is on the lumenal side. Residues 228-248 (FFSFLNSITVVVLLIGLISFL) form a helical membrane-spanning segment. Topologically, residues 249-291 (FMRHLKNELRSYSIGDEEERKEAGWKLVHSDVFRCPRNISWLC) are cytoplasmic. The chain crosses the membrane as a helical span at residues 292–312 (AILGTGTQLLILIIALFALAF). Over 313–321 (TGFLYPYNR) the chain is Lumenal. Residues 322–342 (GMLLTSLVIMYTLTSIVAGYT) form a helical membrane-spanning segment. Residues 343 to 361 (STSFHSQFEGNKQKRSVRL) lie on the Cytoplasmic side of the membrane. Residues 362-382 (AGILYPVPFFIILSVLNTVAI) form a helical membrane-spanning segment. The Lumenal segment spans residues 383–394 (TYGATAALPFGT). The helical transmembrane segment at 395 to 415 (IVIIILIFTLLNIPFLMLGGV) threads the bilayer. At 416 to 450 (LGNRFGLLEFQPPSAVKRNPREIPPQNWYRRKLYQ) the chain is on the cytoplasmic side. Residues 451-471 (VFLGGFVPFSAVVLEWHQLYA) form a helical membrane-spanning segment. Residues 472–482 (SLWGFKIYTSP) are Lumenal-facing. A helical transmembrane segment spans residues 483–503 (GIMLFTFIVLIFLSSSVGIIL). Topologically, residues 504 to 518 (TYIQLSGEDHEWWWR) are cytoplasmic. A helical transmembrane segment spans residues 519–539 (SILCGGFTAVFMYGYGVLFYL). Residues 540–550 (RSDMTGFLQLS) lie on the Lumenal side of the membrane. A helical transmembrane segment spans residues 551–571 (FYLGYTALLCYALFLVLGTIS). Residues 572-589 (FLASLMFIRHIYRSVKLE) are Cytoplasmic-facing. Positions 578-583 (FIRHIY) match the Endoplasmic reticulum export signal motif. A Golgi retention signal motif is present at residues 587–589 (KLE).

Belongs to the nonaspanin (TM9SF) (TC 9.A.2) family. As to expression, expressed in the root cap and in giant cells.

Its subcellular location is the endosome membrane. The protein resides in the golgi apparatus membrane. This chain is Transmembrane 9 superfamily member 5, found in Arabidopsis thaliana (Mouse-ear cress).